The primary structure comprises 341 residues: L-threonine 3-dehydrogenase (341 aa).

Cysteine 38 serves as a coordination point for Zn(2+). Catalysis depends on charge relay system residues threonine 40 and histidine 43. Zn(2+)-binding residues include histidine 63, glutamate 64, cysteine 93, cysteine 96, cysteine 99, and cysteine 107. NAD(+) is bound by residues isoleucine 175, aspartate 195, arginine 200, 262–264 (LGI), and 286–287 (IY).

The protein belongs to the zinc-containing alcohol dehydrogenase family. As to quaternary structure, homotetramer. Requires Zn(2+) as cofactor.

The protein localises to the cytoplasm. The enzyme catalyses L-threonine + NAD(+) = (2S)-2-amino-3-oxobutanoate + NADH + H(+). The protein operates within amino-acid degradation; L-threonine degradation via oxydo-reductase pathway; glycine from L-threonine: step 1/2. Functionally, catalyzes the NAD(+)-dependent oxidation of L-threonine to 2-amino-3-ketobutyrate. The chain is L-threonine 3-dehydrogenase from Marinomonas sp. (strain MWYL1).